The primary structure comprises 88 residues: Protein GOLVEN 10 (88 aa).

The N-terminal stretch at 1–22 (MSSIHVASMILLLFLFLHHSDS) is a signal peptide. Residues 23–75 (RHLDNVHITASRFSLVKDQNVVSSSTSKEPVKVSRFVPGPLKHHHRRPPLLFA) constitute a propeptide that is removed on maturation. The interval 44-88 (VSSSTSKEPVKVSRFVPGPLKHHHRRPPLLFADYPKPSTRPPRHN) is disordered. Residue Tyr-77 is modified to Sulfotyrosine. Pro-85 bears the Hydroxyproline mark.

Belongs to the RGF family. Binds to LRR receptor-like serine/threonine-protein kinases RGI1, RGI2 and RGI3 to trigger their dimerization with SERK proteins and subsequent signaling. Expressed in roots, shoots, leaves and flowers.

It localises to the secreted. The protein localises to the endoplasmic reticulum. In terms of biological role, signaling peptide (root growth factor) that maintains the postembryonic root stem cell niche. Regulates the pattern of root growth and lateral root development by modulating the length and the number of cortical cells in the root apical meristem (RAM), and the anticlinal asymmetric cell divisions in lateral root initiation cells. The chain is Protein GOLVEN 10 from Arabidopsis thaliana (Mouse-ear cress).